We begin with the raw amino-acid sequence, 1342 residues long: MAYSYSEKKRIRKSFGKRSQVLNVPYLLTIQLDSFDKFIQRDPEGLQGLEAAFRSVFPIVSSNGATELQYVSYELGEPVFDVRECQIRGTTYAAPLRVKLRLVTFDREAAAGTVKDIKEQNVYMGEIPLMTDNGTFVINGTERVIVSQLHRSPGVFFDSDKGKTHASGKVLYNARIIPYRGSWLDFEFDPKDNLYARIDRRRKLPATIILRALGYTTEEILNMFFETATFHIEDNRLLMTLVPERLRGETAAFDIEANGKIYVESGRRITARHIRALEKDNITQIQVPTEYIVGRVTARDYVDLSTGEIVCPANSEIGLETLAALAQAGYNEIEVLFTNDLDYGPYISETLRIDPTYDRLSALVEIYRMMRPGEPPTKEAAEALFDNMFFSTDRYDLSAVGRMKFNRSLDIPEGVGTGILSNDDIIGVMKKLIEIRNGRGEVDDIDHLGNRRIRSVGEMAENQFRIGLVRVERAVRERLSLGDLDGVTPQDLINAKPISAAVKEFFGSSQLSQFMDQNNPLSEVTHKRRISALGSGGLTRERAGFEVRDVHTTHYGRLCPIETPEGPNIGLINSLSVYARTNNYGFLETPFRKVVNGQVTEEIEYLSAIEEGAYVIAQANSNLDENFRFTDTYVTCRGEHGESGLYRPEEIHYMDVSTQQVVSVAAALIPFLEHDDANRALMGANMQRQAVPTLRADKPLVGTGMEKPIALDSGVAVIAKRGGTIQYVDASRIVVKVNEDETVAGEAGIDIYNLIKYTRSNQNTCINQIPCVKLGEPVGRGEILADGPSTDLGELALGQNIRVAFMPWNGYNFEDSMLVSERVVQEDRFTTIHIQELSCVARDTKLGAEEITADIPNVGESALSKLDESGIVYIGAEVKGGDILVGKVTPKGETQLIPEEKLLRAIFGEKASDVKDSSLRVPNGTSGTVIDVQVFTRDGVEKDKRAKDIEEIQLREAKKDLTEELEILEAGLFTRVRNLLLEGGVAQATLDNLAREKWLEQTLDDEAKQNQLEQLAEQHEELRKEFERKLEIKRNKIIQGDDLAPGVLKVVKVYLAVKRQIQPGDKMAGRHGNKGVISKINPVEDMPYDENGQPVEIVLNPLGVPSRMNIGQILETHLGLAARGIGDQIDKMIKQQQEIAKLREYIQKAYDLGHGAQSVDLSTFSDEEVMRLAQNLRKGLPLATPVFDGAHESEIKGLLELGGLPTSGQITLYDGRTGEKFERLVTVGYMYMLKLNHLVDDKMHARSTGSYSLVTQQPLGGKAQLGGQRFGEMEVWALEAYGAAYTLQEMLTVKSDDVNGRTKMYKNIVDGTHYMEPGIPESFNVITKEIRALAIDMELDEA.

It belongs to the RNA polymerase beta chain family. The RNAP catalytic core consists of 2 alpha, 1 beta, 1 beta' and 1 omega subunit. When a sigma factor is associated with the core the holoenzyme is formed, which can initiate transcription.

The catalysed reaction is RNA(n) + a ribonucleoside 5'-triphosphate = RNA(n+1) + diphosphate. In terms of biological role, DNA-dependent RNA polymerase catalyzes the transcription of DNA into RNA using the four ribonucleoside triphosphates as substrates. The polypeptide is DNA-directed RNA polymerase subunit beta (Glaesserella parasuis serovar 5 (strain SH0165) (Haemophilus parasuis)).